A 449-amino-acid polypeptide reads, in one-letter code: Phosphoglucosamine mutase (449 aa).

Catalysis depends on S100, which acts as the Phosphoserine intermediate. Residues S100, D241, D243, and D245 each coordinate Mg(2+). At S100 the chain carries Phosphoserine.

This sequence belongs to the phosphohexose mutase family. It depends on Mg(2+) as a cofactor. In terms of processing, activated by phosphorylation.

The enzyme catalyses alpha-D-glucosamine 1-phosphate = D-glucosamine 6-phosphate. Catalyzes the conversion of glucosamine-6-phosphate to glucosamine-1-phosphate. The protein is Phosphoglucosamine mutase of Clostridium botulinum (strain Loch Maree / Type A3).